We begin with the raw amino-acid sequence, 107 residues long: Translation initiation factor IF-1, chloroplastic (107 aa).

The 76-residue stretch at 8–83 (REKKNPREAK…SKGRIIYRLP (76 aa)) folds into the S1-like domain.

The protein belongs to the IF-1 family. In terms of assembly, component of the 30S ribosomal translation pre-initiation complex which assembles on the 30S ribosome in the order IF-2 and IF-3, IF-1 and N-formylmethionyl-tRNA(fMet); mRNA recruitment can occur at any time during PIC assembly.

Its subcellular location is the plastid. The protein localises to the chloroplast. Its function is as follows. One of the essential components for the initiation of protein synthesis. Stabilizes the binding of IF-2 and IF-3 on the 30S subunit to which N-formylmethionyl-tRNA(fMet) subsequently binds. Helps modulate mRNA selection, yielding the 30S pre-initiation complex (PIC). Upon addition of the 50S ribosomal subunit IF-1, IF-2 and IF-3 are released leaving the mature 70S translation initiation complex. The polypeptide is Translation initiation factor IF-1, chloroplastic (Lolium perenne (Perennial ryegrass)).